The primary structure comprises 227 residues: UPF0688 protein C1orf174 homolog (227 aa).

Disordered regions lie at residues 1–122 (MRKR…VSDL) and 207–227 (AKEEDEDDDDYVDGLANEGNI). The segment covering 47 to 63 (TEKESSKKLRKDEKGPV) has biased composition (basic and acidic residues). 2 stretches are compositionally biased toward polar residues: residues 77–104 (AASNESSNVNDSQQSEKSITNTKDNGTR) and 113–122 (RLPSSPVSDL).

It belongs to the UPF0688 family.

The protein resides in the nucleus. The sequence is that of UPF0688 protein C1orf174 homolog from Xenopus tropicalis (Western clawed frog).